The chain runs to 129 residues: Small ribosomal subunit protein uS11 (129 aa).

Belongs to the universal ribosomal protein uS11 family. In terms of assembly, part of the 30S ribosomal subunit. Interacts with proteins S7 and S18. Binds to IF-3.

Located on the platform of the 30S subunit, it bridges several disparate RNA helices of the 16S rRNA. Forms part of the Shine-Dalgarno cleft in the 70S ribosome. In Francisella tularensis subsp. holarctica (strain FTNF002-00 / FTA), this protein is Small ribosomal subunit protein uS11.